We begin with the raw amino-acid sequence, 347 residues long: Heat-inducible transcription repressor HrcA (347 aa).

The protein belongs to the HrcA family.

Negative regulator of class I heat shock genes (grpE-dnaK-dnaJ and groELS operons). Prevents heat-shock induction of these operons. This chain is Heat-inducible transcription repressor HrcA, found in Lactobacillus delbrueckii subsp. bulgaricus (strain ATCC BAA-365 / Lb-18).